We begin with the raw amino-acid sequence, 182 residues long: Bifunctional protein PyrR (182 aa).

The short motif at 99-111 (VILVDDVLYTGRT) is the PRPP-binding element.

This sequence belongs to the purine/pyrimidine phosphoribosyltransferase family. PyrR subfamily. In terms of assembly, homodimer and homohexamer; in equilibrium.

It carries out the reaction UMP + diphosphate = 5-phospho-alpha-D-ribose 1-diphosphate + uracil. Regulates transcriptional attenuation of the pyrimidine nucleotide (pyr) operon by binding in a uridine-dependent manner to specific sites on pyr mRNA. This disrupts an antiterminator hairpin in the RNA and favors formation of a downstream transcription terminator, leading to a reduced expression of downstream genes. Its function is as follows. Also displays a weak uracil phosphoribosyltransferase activity which is not physiologically significant. This Alkaliphilus metalliredigens (strain QYMF) protein is Bifunctional protein PyrR.